A 324-amino-acid chain; its full sequence is Methionyl-tRNA formyltransferase (324 aa).

A (6S)-5,6,7,8-tetrahydrofolate-binding site is contributed by 114–117 (SLLP).

This sequence belongs to the Fmt family.

The catalysed reaction is L-methionyl-tRNA(fMet) + (6R)-10-formyltetrahydrofolate = N-formyl-L-methionyl-tRNA(fMet) + (6S)-5,6,7,8-tetrahydrofolate + H(+). Attaches a formyl group to the free amino group of methionyl-tRNA(fMet). The formyl group appears to play a dual role in the initiator identity of N-formylmethionyl-tRNA by promoting its recognition by IF2 and preventing the misappropriation of this tRNA by the elongation apparatus. This chain is Methionyl-tRNA formyltransferase, found in Parabacteroides distasonis (strain ATCC 8503 / DSM 20701 / CIP 104284 / JCM 5825 / NCTC 11152).